The sequence spans 338 residues: Replication factor C subunit 3 (338 aa).

57–64 is a binding site for ATP; the sequence is GPPGTGKT.

It belongs to the activator 1 small subunits family. As to quaternary structure, heteropentamer of subunits RFC1, RFC2, RFC3, RFC4 and RFC5 that forms a complex with PCNA in the presence of ATP.

The protein resides in the nucleus. Its function is as follows. The elongation of primed DNA templates by DNA polymerase delta and epsilon requires the action of the accessory proteins proliferating cell nuclear antigen (PCNA) and activator 1. Subunit 3 binds ATP. This is Replication factor C subunit 3 (RFC3) from Blastobotrys adeninivorans (Yeast).